A 460-amino-acid polypeptide reads, in one-letter code: ATP synthase subunit beta (460 aa).

150-157 provides a ligand contact to ATP; the sequence is GGAGVGKT.

It belongs to the ATPase alpha/beta chains family. F-type ATPases have 2 components, CF(1) - the catalytic core - and CF(0) - the membrane proton channel. CF(1) has five subunits: alpha(3), beta(3), gamma(1), delta(1), epsilon(1). CF(0) has three main subunits: a(1), b(2) and c(9-12). The alpha and beta chains form an alternating ring which encloses part of the gamma chain. CF(1) is attached to CF(0) by a central stalk formed by the gamma and epsilon chains, while a peripheral stalk is formed by the delta and b chains.

Its subcellular location is the cell inner membrane. The enzyme catalyses ATP + H2O + 4 H(+)(in) = ADP + phosphate + 5 H(+)(out). Its function is as follows. Produces ATP from ADP in the presence of a proton gradient across the membrane. The catalytic sites are hosted primarily by the beta subunits. The sequence is that of ATP synthase subunit beta from Escherichia coli (strain SMS-3-5 / SECEC).